The following is an 872-amino-acid chain: Extended synaptotagmin-2-A (872 aa).

The interval 1-25 is disordered; it reads MSSESSAEKGPPPSPAENVQPGVPP. The Cytoplasmic portion of the chain corresponds to 1–31; it reads MSSESSAEKGPPPSPAENVQPGVPPAAEEPG. A helical transmembrane segment spans residues 32–52; that stretch reads MISVDIAGLFYQFSKTFILIF. The Lumenal portion of the chain corresponds to 53 to 55; sequence PVY. Residues 56-76 form a helical membrane-spanning segment; the sequence is VLGYFGLSFSWLLIALVLLLW. The Cytoplasmic portion of the chain corresponds to 77–872; sequence WRRNKGNKNS…EDGTRPAVSS (796 aa). An SMP-LTD domain is found at 119-298; that stretch reads DIERAEWLNK…LPNRITVPLV (180 aa). 2 consecutive C2 domains span residues 297-417 and 442-588; these read LVSD…DEWF and NLDQ…HLNN. Residues Lys328, Asp329, Asp341, Asp388, Glu389, Asp390, Asp392, Asp394, and Asp395 each contribute to the Ca(2+) site. Residues 608–617 show a composition bias toward basic and acidic residues; the sequence is KPVRSPDEQH. Positions 608-711 are disordered; the sequence is KPVRSPDEQH…EPTPSIASDI (104 aa). Pro residues predominate over residues 632–652; it reads PPTPQMPSPSPAVAHKPPPTP. Over residues 664–681 the composition is skewed to polar residues; it reads NKGTPPSASPKSPTELHQ. The span at 682–696 shows a compositional bias: low complexity; sequence SSSSLSGSSFTYSPS. The 123-residue stretch at 737-859 folds into the C2 3 domain; the sequence is PLGQIQLTIR…DAAKGWTQWY (123 aa). Positions 784 to 791 are required for phosphatidylinositol 4,5-bisphosphate-dependent location at the cell membrane; the sequence is KRRSGRRK.

This sequence belongs to the extended synaptotagmin family. Interacts with fgfr1 that has been activated by fgf1 binding. Interacts (via C2 domains) with the AP-2 complex (via an alpha subunit). Identified in a complex with the AP-2 complex and fgfr1.

It is found in the cell membrane. It localises to the endoplasmic reticulum membrane. In terms of biological role, tethers the endoplasmic reticulum to the cell membrane and promotes the formation of appositions between the endoplasmic reticulum and the cell membrane. Binds glycerophospholipids in a barrel-like domain and may play a role in cellular lipid transport. Plays a role in the rapid internalization of fgfr1 that has been activated by fgf1 binding; this occurs most likely via the AP-2 complex. Required for normal fgf signaling and the activation of downstream signaling cascades via its role in the internalization of activated fgfr1. Required for normal embryonic development via its role in fgf signaling and the downstream regulation of t/xBRA expression. The sequence is that of Extended synaptotagmin-2-A (esyt2-a) from Xenopus laevis (African clawed frog).